The chain runs to 342 residues: GTPase Obg (342 aa).

One can recognise an Obg domain in the interval 1–159; that stretch reads MQFIDRAEIE…RHLRLELKLL (159 aa). The 169-residue stretch at 160 to 328 folds into the OBG-type G domain; the sequence is AEVGIIGLPN…LLAKVWQQLE (169 aa). GTP contacts are provided by residues 166-173, 191-195, 213-216, 280-283, and 309-311; these read GLPNAGKS, FTTLI, DIPG, NKID, and SAV. The Mg(2+) site is built by S173 and T193.

Belongs to the TRAFAC class OBG-HflX-like GTPase superfamily. OBG GTPase family. In terms of assembly, monomer. Requires Mg(2+) as cofactor.

The protein localises to the cytoplasm. An essential GTPase which binds GTP, GDP and possibly (p)ppGpp with moderate affinity, with high nucleotide exchange rates and a fairly low GTP hydrolysis rate. Plays a role in control of the cell cycle, stress response, ribosome biogenesis and in those bacteria that undergo differentiation, in morphogenesis control. In Microcystis aeruginosa (strain NIES-843 / IAM M-2473), this protein is GTPase Obg.